Reading from the N-terminus, the 139-residue chain is Maintenance of telomere capping protein 7 (139 aa).

2 helical membrane-spanning segments follow: residues 13–33 (SHHVLFAEPGFFLCNFFFVLL) and 42–62 (FYFLFILLFIIYIAIIYFVFI). Residues 94 to 121 (RSVANPALPPQKKKKKKKKGTLRTGEVE) form a disordered region. Positions 104 to 114 (QKKKKKKKKGT) are enriched in basic residues.

It is found in the membrane. In terms of biological role, may be involved in telomere capping. The protein is Maintenance of telomere capping protein 7 (MTC7) of Saccharomyces cerevisiae (strain ATCC 204508 / S288c) (Baker's yeast).